We begin with the raw amino-acid sequence, 138 residues long: uncharacterized protein (138 aa).

This is an uncharacterized protein from Homo sapiens (Human).